The sequence spans 161 residues: Large ribosomal subunit protein uL15 (161 aa).

A disordered region spans residues 1–43 (MKLSEISDNPGARKKRMRIGRGIGSGKGKTGGRGGKGQTARSG). Residues 21–37 (RGIGSGKGKTGGRGGKG) show a composition bias toward gly residues.

Belongs to the universal ribosomal protein uL15 family. As to quaternary structure, part of the 50S ribosomal subunit.

Its function is as follows. Binds to the 23S rRNA. This is Large ribosomal subunit protein uL15 from Rhodopseudomonas palustris (strain BisB5).